Here is a 71-residue protein sequence, read N- to C-terminus: Conotoxin PnMEKL-032 (71 aa).

The signal sequence occupies residues 1–19 (MQKLIILLLVAAVLMSTQA). Positions 20 to 46 (LFQEKRLKEKINFLSKEKADAEKQQKR) are excised as a propeptide. Cystine bridges form between Cys-48–Cys-62, Cys-55–Cys-66, and Cys-61–Cys-70.

Belongs to the conotoxin O2 superfamily. Expressed by the venom duct.

Its subcellular location is the secreted. The polypeptide is Conotoxin PnMEKL-032 (Conus pennaceus (Feathered cone)).